Here is a 177-residue protein sequence, read N- to C-terminus: Protein GrpE (177 aa).

Composition is skewed to basic and acidic residues over residues 1–19 and 29–41; these read MAKHKHEEHPEDVEVKETV and SPEKSELELANER. The tract at residues 1-41 is disordered; the sequence is MAKHKHEEHPEDVEVKETVETAEQAESASPEKSELELANER.

This sequence belongs to the GrpE family. As to quaternary structure, homodimer.

It localises to the cytoplasm. Participates actively in the response to hyperosmotic and heat shock by preventing the aggregation of stress-denatured proteins, in association with DnaK and GrpE. It is the nucleotide exchange factor for DnaK and may function as a thermosensor. Unfolded proteins bind initially to DnaJ; upon interaction with the DnaJ-bound protein, DnaK hydrolyzes its bound ATP, resulting in the formation of a stable complex. GrpE releases ADP from DnaK; ATP binding to DnaK triggers the release of the substrate protein, thus completing the reaction cycle. Several rounds of ATP-dependent interactions between DnaJ, DnaK and GrpE are required for fully efficient folding. This Streptococcus gordonii (strain Challis / ATCC 35105 / BCRC 15272 / CH1 / DL1 / V288) protein is Protein GrpE.